Consider the following 251-residue polypeptide: Probable phosphatase Sama_2233 (251 aa).

Zn(2+) is bound by residues H8, H10, H16, H41, E74, H102, H132, D193, and H195.

It belongs to the PHP family. Zn(2+) serves as cofactor.

This is Probable phosphatase Sama_2233 from Shewanella amazonensis (strain ATCC BAA-1098 / SB2B).